The chain runs to 150 residues: Triosephosphate isomerase (150 aa).

Residues Asn-9 and Lys-11 each contribute to the substrate site. The active-site Electrophile is the His-95.

The protein belongs to the triosephosphate isomerase family. In terms of assembly, homodimer.

It is found in the cytoplasm. The enzyme catalyses D-glyceraldehyde 3-phosphate = dihydroxyacetone phosphate. Its pathway is carbohydrate biosynthesis; gluconeogenesis. The protein operates within carbohydrate degradation; glycolysis; D-glyceraldehyde 3-phosphate from glycerone phosphate: step 1/1. This chain is Triosephosphate isomerase (tpiA), found in Mycoplasmoides pirum (Mycoplasma pirum).